We begin with the raw amino-acid sequence, 1486 residues long: Chromosome partition protein MukB (1486 aa).

Position 34-41 (34-41) interacts with ATP; the sequence is GGNGAGKS. Coiled-coil stretches lie at residues 326–418, 444–480, and 509–603; these read LEAD…QYNQ, LETFQAKELEATEKMLSLEQKMSMAQTAHSQFEQAYQ, and RHLA…RAPV. The interval 666-783 is flexible hinge; it reads PGGSEDQRLN…EVPLFGRAAR (118 aa). Coiled-coil stretches lie at residues 835-923, 977-1115, and 1209-1266; these read EAEI…AKLE, EMLS…TAKA, and VEAI…QNVS.

This sequence belongs to the SMC family. MukB subfamily. As to quaternary structure, homodimerization via its hinge domain. Binds to DNA via its C-terminal region. Interacts, and probably forms a ternary complex, with MukE and MukF via its C-terminal region. The complex formation is stimulated by calcium or magnesium. Interacts with tubulin-related protein FtsZ.

The protein resides in the cytoplasm. Its subcellular location is the nucleoid. Its function is as follows. Plays a central role in chromosome condensation, segregation and cell cycle progression. Functions as a homodimer, which is essential for chromosome partition. Involved in negative DNA supercoiling in vivo, and by this means organize and compact chromosomes. May achieve or facilitate chromosome segregation by condensation DNA from both sides of a centrally located replisome during cell division. The polypeptide is Chromosome partition protein MukB (Escherichia coli O17:K52:H18 (strain UMN026 / ExPEC)).